The primary structure comprises 343 residues: Protein RecA (343 aa).

Glycine 66–threonine 73 contacts ATP.

The protein belongs to the RecA family.

The protein resides in the cytoplasm. Can catalyze the hydrolysis of ATP in the presence of single-stranded DNA, the ATP-dependent uptake of single-stranded DNA by duplex DNA, and the ATP-dependent hybridization of homologous single-stranded DNAs. It interacts with LexA causing its activation and leading to its autocatalytic cleavage. The chain is Protein RecA from Rickettsia canadensis (strain McKiel).